The primary structure comprises 439 residues: 23S rRNA (uracil(1939)-C(5))-methyltransferase RlmD (439 aa).

Residues 10–69 (KTQLNTRHQAVQVERLDHHGAGIAYLKKKPLFIDGALPGEEVVTQLVEEKSKFARGKLIK) enclose the TRAM domain. Positions 82, 88, 91, and 169 each coordinate [4Fe-4S] cluster. Residues Q272, F301, N306, E322, N349, and D370 each contribute to the S-adenosyl-L-methionine site. C396 serves as the catalytic Nucleophile.

This sequence belongs to the class I-like SAM-binding methyltransferase superfamily. RNA M5U methyltransferase family. RlmD subfamily.

The catalysed reaction is uridine(1939) in 23S rRNA + S-adenosyl-L-methionine = 5-methyluridine(1939) in 23S rRNA + S-adenosyl-L-homocysteine + H(+). In terms of biological role, catalyzes the formation of 5-methyl-uridine at position 1939 (m5U1939) in 23S rRNA. The sequence is that of 23S rRNA (uracil(1939)-C(5))-methyltransferase RlmD from Vibrio campbellii (strain ATCC BAA-1116).